The sequence spans 374 residues: Lipoyl synthase, mitochondrial (374 aa).

The transit peptide at 1–19 (MHSRSALLYRFLRPASRCF) directs the protein to the mitochondrion. [4Fe-4S] cluster-binding residues include C103, C108, C114, C134, C138, C141, and S350. Positions 119-339 (ETGTATATIM…RLLGMEMGFR (221 aa)) constitute a Radical SAM core domain.

It belongs to the radical SAM superfamily. Lipoyl synthase family. Requires [4Fe-4S] cluster as cofactor. As to expression, expressed in leaves and flowers, but not in roots. Expressed in roots, rosette leaves, cauline leaves, stems, flowers and siliques.

It localises to the mitochondrion. It catalyses the reaction [[Fe-S] cluster scaffold protein carrying a second [4Fe-4S](2+) cluster] + N(6)-octanoyl-L-lysyl-[protein] + 2 oxidized [2Fe-2S]-[ferredoxin] + 2 S-adenosyl-L-methionine + 4 H(+) = [[Fe-S] cluster scaffold protein] + N(6)-[(R)-dihydrolipoyl]-L-lysyl-[protein] + 4 Fe(3+) + 2 hydrogen sulfide + 2 5'-deoxyadenosine + 2 L-methionine + 2 reduced [2Fe-2S]-[ferredoxin]. It participates in protein modification; protein lipoylation via endogenous pathway; protein N(6)-(lipoyl)lysine from octanoyl-[acyl-carrier-protein]: step 2/2. In terms of biological role, catalyzes the radical-mediated insertion of two sulfur atoms into the C-6 and C-8 positions of the octanoyl moiety bound to the lipoyl domains of lipoate-dependent enzymes, thereby converting the octanoylated domains into lipoylated derivatives. Together with LIP2 is essential for mitochondrial protein lipoylation during seed development. Required for the lipoylation of mitochondrial pyruvate dehydrogenase component E2 proteins in leaves and roots. This chain is Lipoyl synthase, mitochondrial, found in Arabidopsis thaliana (Mouse-ear cress).